Here is an 840-residue protein sequence, read N- to C-terminus: Protein translocase subunit SecA (840 aa).

ATP contacts are provided by residues Gln-85, 103-107, and Asp-492; that span reads GEGKT. The disordered stretch occupies residues 787–821; sequence QRERVAKETGASHGGDSQEIKKKPVKKEPKVGRND. The span at 802–819 shows a compositional bias: basic and acidic residues; that stretch reads DSQEIKKKPVKKEPKVGR. Zn(2+) contacts are provided by Cys-823, Cys-825, Cys-834, and Cys-835.

Belongs to the SecA family. As to quaternary structure, monomer and homodimer. Part of the essential Sec protein translocation apparatus which comprises SecA, SecYEG and auxiliary proteins SecDF. Other proteins may also be involved. It depends on Zn(2+) as a cofactor.

It is found in the cell membrane. It localises to the cytoplasm. It catalyses the reaction ATP + H2O + cellular proteinSide 1 = ADP + phosphate + cellular proteinSide 2.. Functionally, part of the Sec protein translocase complex. Interacts with the SecYEG preprotein conducting channel. Has a central role in coupling the hydrolysis of ATP to the transfer of proteins into and across the cell membrane, serving as an ATP-driven molecular motor driving the stepwise translocation of polypeptide chains across the membrane. This is Protein translocase subunit SecA from Clostridium perfringens (strain SM101 / Type A).